A 190-amino-acid polypeptide reads, in one-letter code: Lipid A acyltransferase PagP (190 aa).

The N-terminal stretch at 1 to 18 (MKRLISCLTIICALNASA) is a signal peptide. Catalysis depends on residues His-60, Asp-103, and Ser-104.

It belongs to the lipid A palmitoyltransferase family. In terms of assembly, homodimer.

It is found in the cell outer membrane. It catalyses the reaction a lipid A + a 1,2-diacyl-sn-glycero-3-phosphocholine = a hepta-acyl lipid A + a 2-acyl-sn-glycero-3-phosphocholine. It carries out the reaction a lipid IVA + a 1,2-diacyl-sn-glycero-3-phosphocholine = a lipid IVB + a 2-acyl-sn-glycero-3-phosphocholine. The catalysed reaction is a lipid IIA + a 1,2-diacyl-sn-glycero-3-phosphocholine = a lipid IIB + a 2-acyl-sn-glycero-3-phosphocholine. Its function is as follows. Transfers a fatty acid residue from the sn-1 position of a phospholipid to the N-linked hydroxyfatty acid chain on the proximal unit of lipid A or its precursors. The sequence is that of Lipid A acyltransferase PagP from Legionella pneumophila serogroup 1 (strain 2300/99 Alcoy).